The sequence spans 436 residues: Ribulose bisphosphate carboxylase large chain (436 aa).

Lys4 is subject to N6,N6,N6-trimethyllysine. The substrate site is built by Asn113 and Thr163. The Proton acceptor role is filled by Lys165. Residue Lys167 coordinates substrate. Mg(2+) is bound by residues Lys191, Asp193, and Glu194. Lys191 carries the post-translational modification N6-carboxylysine. The active-site Proton acceptor is the His284. Residues Arg285, His317, and Ser369 each coordinate substrate.

The protein belongs to the RuBisCO large chain family. Type I subfamily. As to quaternary structure, heterohexadecamer of 8 large chains and 8 small chains; disulfide-linked. The disulfide link is formed within the large subunit homodimers. Mg(2+) is required as a cofactor. In terms of processing, the disulfide bond which can form in the large chain dimeric partners within the hexadecamer appears to be associated with oxidative stress and protein turnover.

Its subcellular location is the plastid. The protein localises to the chloroplast. The enzyme catalyses 2 (2R)-3-phosphoglycerate + 2 H(+) = D-ribulose 1,5-bisphosphate + CO2 + H2O. The catalysed reaction is D-ribulose 1,5-bisphosphate + O2 = 2-phosphoglycolate + (2R)-3-phosphoglycerate + 2 H(+). In terms of biological role, ruBisCO catalyzes two reactions: the carboxylation of D-ribulose 1,5-bisphosphate, the primary event in carbon dioxide fixation, as well as the oxidative fragmentation of the pentose substrate in the photorespiration process. Both reactions occur simultaneously and in competition at the same active site. The polypeptide is Ribulose bisphosphate carboxylase large chain (Sanguinaria canadensis (Bloodroot)).